Here is a 159-residue protein sequence, read N- to C-terminus: Phosphopantetheine adenylyltransferase (159 aa).

Residue T10 coordinates substrate. ATP is bound by residues 10–11 (TF) and H18. Residues K42, M74, and R88 each coordinate substrate. ATP contacts are provided by residues 89-91 (GLR), E99, and 124-130 (WSFISSS).

The protein belongs to the bacterial CoaD family. In terms of assembly, homohexamer. Mg(2+) serves as cofactor.

It localises to the cytoplasm. The enzyme catalyses (R)-4'-phosphopantetheine + ATP + H(+) = 3'-dephospho-CoA + diphosphate. It participates in cofactor biosynthesis; coenzyme A biosynthesis; CoA from (R)-pantothenate: step 4/5. In terms of biological role, reversibly transfers an adenylyl group from ATP to 4'-phosphopantetheine, yielding dephospho-CoA (dPCoA) and pyrophosphate. This chain is Phosphopantetheine adenylyltransferase, found in Yersinia pestis.